The sequence spans 107 residues: Thiosulfate sulfurtransferase GlpE (107 aa).

The Rhodanese domain occupies 19–107; it reads KDHNARMVDI…WNKAGLPVEK (89 aa). Residue cysteine 67 is the Cysteine persulfide intermediate of the active site.

Belongs to the GlpE family.

It localises to the cytoplasm. It catalyses the reaction thiosulfate + hydrogen cyanide = thiocyanate + sulfite + 2 H(+). The enzyme catalyses thiosulfate + [thioredoxin]-dithiol = [thioredoxin]-disulfide + hydrogen sulfide + sulfite + 2 H(+). Functionally, transferase that catalyzes the transfer of sulfur from thiosulfate to thiophilic acceptors such as cyanide or dithiols. May function in a CysM-independent thiosulfate assimilation pathway by catalyzing the conversion of thiosulfate to sulfite, which can then be used for L-cysteine biosynthesis. This Aliivibrio salmonicida (strain LFI1238) (Vibrio salmonicida (strain LFI1238)) protein is Thiosulfate sulfurtransferase GlpE.